A 334-amino-acid polypeptide reads, in one-letter code: Phenazine-1-carboxylate N-methyltransferase (334 aa).

Residues Asp-198 and Arg-241 each coordinate S-adenosyl-L-methionine.

It belongs to the class I-like SAM-binding methyltransferase superfamily. Cation-independent O-methyltransferase family. In terms of assembly, homodimer in solution. Probably interacts transiently with PhzS.

The enzyme catalyses phenazine-1-carboxylate + S-adenosyl-L-methionine = 5-methyl-phenazine-1-carboxylate + S-adenosyl-L-homocysteine. The protein operates within secondary metabolite biosynthesis; pyocyanine biosynthesis. In vitro, requires PhzS for activity. Its function is as follows. Involved in the biosynthesis of pyocyanine, a blue-pigmented phenazine derivative, which plays a role in virulence. Converts phenazine-1-carboxylate (PCA) to 5-methylphenazine-1-carboxylate (5-methyl-PCA). In Pseudomonas aeruginosa (strain ATCC 15692 / DSM 22644 / CIP 104116 / JCM 14847 / LMG 12228 / 1C / PRS 101 / PAO1), this protein is Phenazine-1-carboxylate N-methyltransferase.